Reading from the N-terminus, the 530-residue chain is Ubiquitin carboxyl-terminal hydrolase 17-like protein 18 (530 aa).

Residues 80 to 375 form the USP domain; sequence AGLQNMGNTC…QAYVLFYIQK (296 aa). The active-site Nucleophile is Cys89. Catalysis depends on His334, which acts as the Proton acceptor. Basic and acidic residues-rich tracts occupy residues 382 to 392 and 398 to 413; these read SESVSRGREPR and DTDR…RDHP. 2 disordered regions span residues 382–414 and 509–530; these read SESV…DHPC and RGRA…LVCQ. Residues 510-524 show a composition bias toward basic residues; that stretch reads GRARRSKGKNKHSKR.

It belongs to the peptidase C19 family. USP17 subfamily.

The protein localises to the nucleus. The protein resides in the endoplasmic reticulum. It carries out the reaction Thiol-dependent hydrolysis of ester, thioester, amide, peptide and isopeptide bonds formed by the C-terminal Gly of ubiquitin (a 76-residue protein attached to proteins as an intracellular targeting signal).. Functionally, deubiquitinating enzyme that removes conjugated ubiquitin from specific proteins to regulate different cellular processes that may include cell proliferation, progression through the cell cycle, apoptosis, cell migration, and the cellular response to viral infection. In Homo sapiens (Human), this protein is Ubiquitin carboxyl-terminal hydrolase 17-like protein 18 (USP17L18).